Here is a 435-residue protein sequence, read N- to C-terminus: Histidine--tRNA ligase (435 aa).

Belongs to the class-II aminoacyl-tRNA synthetase family. In terms of assembly, homodimer.

It localises to the cytoplasm. The enzyme catalyses tRNA(His) + L-histidine + ATP = L-histidyl-tRNA(His) + AMP + diphosphate + H(+). This chain is Histidine--tRNA ligase, found in Synechococcus sp. (strain ATCC 27144 / PCC 6301 / SAUG 1402/1) (Anacystis nidulans).